The primary structure comprises 176 residues: Inorganic pyrophosphatase (176 aa).

Residues lysine 30, arginine 44, and tyrosine 56 each contribute to the substrate site. 3 residues coordinate Mg(2+): aspartate 66, aspartate 71, and aspartate 103. Residue tyrosine 142 coordinates substrate.

The protein belongs to the PPase family. As to quaternary structure, homohexamer. Mg(2+) is required as a cofactor.

The protein resides in the cytoplasm. It carries out the reaction diphosphate + H2O = 2 phosphate + H(+). In terms of biological role, catalyzes the hydrolysis of inorganic pyrophosphate (PPi) forming two phosphate ions. This is Inorganic pyrophosphatase from Vibrio cholerae serotype O1 (strain ATCC 39315 / El Tor Inaba N16961).